The chain runs to 498 residues: Glycerol kinase (498 aa).

Thr12 contributes to the ADP binding site. Positions 12, 13, and 14 each coordinate ATP. Thr12 is a binding site for sn-glycerol 3-phosphate. Arg16 contacts ADP. Sn-glycerol 3-phosphate is bound by residues Arg82, Glu83, Tyr134, and Asp243. Glycerol contacts are provided by Arg82, Glu83, Tyr134, Asp243, and Gln244. ADP contacts are provided by Thr265 and Gly308. Positions 265, 308, 312, and 409 each coordinate ATP. ADP is bound by residues Gly409 and Asn413.

It belongs to the FGGY kinase family. As to quaternary structure, homotetramer and homodimer (in equilibrium).

It carries out the reaction glycerol + ATP = sn-glycerol 3-phosphate + ADP + H(+). The protein operates within polyol metabolism; glycerol degradation via glycerol kinase pathway; sn-glycerol 3-phosphate from glycerol: step 1/1. With respect to regulation, activated by phosphorylation and inhibited by fructose 1,6-bisphosphate (FBP). In terms of biological role, key enzyme in the regulation of glycerol uptake and metabolism. Catalyzes the phosphorylation of glycerol to yield sn-glycerol 3-phosphate. The polypeptide is Glycerol kinase (Clostridium botulinum (strain Langeland / NCTC 10281 / Type F)).